Consider the following 93-residue polypeptide: Protein YzgL (93 aa).

The sequence is that of Protein YzgL (yzgL) from Escherichia coli (strain K12).